A 185-amino-acid polypeptide reads, in one-letter code: Ribosome-recycling factor (185 aa).

Belongs to the RRF family.

It localises to the cytoplasm. In terms of biological role, responsible for the release of ribosomes from messenger RNA at the termination of protein biosynthesis. May increase the efficiency of translation by recycling ribosomes from one round of translation to another. The polypeptide is Ribosome-recycling factor (Clostridium novyi (strain NT)).